Reading from the N-terminus, the 617-residue chain is Proline--tRNA ligase (617 aa).

Belongs to the class-II aminoacyl-tRNA synthetase family. ProS type 1 subfamily. Homodimer.

It is found in the cytoplasm. The catalysed reaction is tRNA(Pro) + L-proline + ATP = L-prolyl-tRNA(Pro) + AMP + diphosphate. Functionally, catalyzes the attachment of proline to tRNA(Pro) in a two-step reaction: proline is first activated by ATP to form Pro-AMP and then transferred to the acceptor end of tRNA(Pro). As ProRS can inadvertently accommodate and process non-cognate amino acids such as alanine and cysteine, to avoid such errors it has two additional distinct editing activities against alanine. One activity is designated as 'pretransfer' editing and involves the tRNA(Pro)-independent hydrolysis of activated Ala-AMP. The other activity is designated 'posttransfer' editing and involves deacylation of mischarged Ala-tRNA(Pro). The misacylated Cys-tRNA(Pro) is not edited by ProRS. This chain is Proline--tRNA ligase, found in Streptococcus agalactiae serotype V (strain ATCC BAA-611 / 2603 V/R).